Here is a 156-residue protein sequence, read N- to C-terminus: Phytohormone-binding protein (156 aa).

Gln22, Gln68, and Thr141 together coordinate gibberellin A3.

Belongs to the BetVI family.

Binds gibberellin A3 (GA3) in vitro. This Medicago truncatula (Barrel medic) protein is Phytohormone-binding protein.